The chain runs to 170 residues: Copper transporter 1 (170 aa).

The disordered stretch occupies residues 1-29; the sequence is MDHDHMHGMPRPSSSSSSSPSSMMNNGSM. Residues 9-29 show a composition bias toward low complexity; sequence MPRPSSSSSSSPSSMMNNGSM. 2 consecutive transmembrane segments (helical) span residues 65–85 and 114–134; these read GMYA…EWLA and IGLA…VFLV.

This sequence belongs to the copper transporter (Ctr) (TC 1.A.56) family. SLC31A subfamily. Expressed in the root apex, lateral root primordia, embryo, trichomes, guard cells and pollen grains.

It is found in the membrane. In terms of biological role, copper transporter involved in copper acquisition and transport in leaves. Required for copper homeostasis and normal plant growth and development. This Arabidopsis thaliana (Mouse-ear cress) protein is Copper transporter 1 (COPT1).